Consider the following 413-residue polypeptide: Phosphatidylcholine:ceramide cholinephosphotransferase 1 (413 aa).

An SAM domain is found at 7-70; the sequence is WSPKKVADWL…LDMIETLKME (64 aa). The residue at position 8 (Ser8) is a Phosphoserine. 5 consecutive transmembrane segments (helical) span residues 136–156, 184–204, 215–235, 276–296, and 304–324; these read FLAFLYALSCFVLTTVMISVV, FSICEINGMILVGLWLIQWLL, FFCIVGTLYLYRCITMYVTTL, MCGDYLYSGHTVMLTLTYLFI, and LWWYHWICWLLSVVGIFCILL. His285 is an active-site residue. Residues 325–413 lie on the Cytoplasmic side of the membrane; that stretch reads AHDHYTVDVV…VKYSRLVNDT (89 aa). Catalysis depends on residues His328 and Asp332.

The protein belongs to the sphingomyelin synthase family. In terms of tissue distribution, brain, heart, kidney, liver, muscle and stomach.

Its subcellular location is the golgi apparatus membrane. It carries out the reaction an N-acylsphing-4-enine + a 1,2-diacyl-sn-glycero-3-phosphocholine = a sphingomyelin + a 1,2-diacyl-sn-glycerol. The catalysed reaction is an N-acylsphinganine + a 1,2-diacyl-sn-glycero-3-phosphocholine = an N-acylsphinganine-1-phosphocholine + a 1,2-diacyl-sn-glycerol. The enzyme catalyses an N-acyl-(4R)-4-hydroxysphinganine + a 1,2-diacyl-sn-glycero-3-phosphocholine = an N-acyl-(4R)-4-hydroxysphinganine-phosphocholine + a 1,2-diacyl-sn-glycerol. It catalyses the reaction 1-(9Z-octadecenoyl)-2-acyl-sn-3-glycerol + a sphingomyelin = a 1-(9Z-octadecenoyl)-2-acyl-sn-glycero-3-phosphocholine + an N-acylsphing-4-enine. It carries out the reaction N-hexadecanoylsphinganine + a 1,2-diacyl-sn-glycero-3-phosphocholine = N-hexadecanoyl-sphinganine-1-phosphocholine + a 1,2-diacyl-sn-glycerol. The catalysed reaction is N-hexadecanoyl-(4R)-hydroxysphinganine + a 1,2-diacyl-sn-glycero-3-phosphocholine = N-hexadecanoyl-(4R)-hydroxysphinganine-phosphocholine + a 1,2-diacyl-sn-glycerol. The enzyme catalyses an N-acylsphing-4-enine + a 1,2-diacyl-sn-glycero-3-phosphoethanolamine = an N-acylsphing-4-enine 1-phosphoethanolamine + a 1,2-diacyl-sn-glycerol. It functions in the pathway sphingolipid metabolism. With respect to regulation, inhibited by bacterial PC-phospholipase C inhibitor D609. Major sphingomyelin synthase at the Golgi apparatus. Catalyzes the reversible transfer of phosphocholine moiety in sphingomyelin biosynthesis: in the forward reaction transfers phosphocholine head group of phosphatidylcholine (PC) on to ceramide (CER) to form ceramide phosphocholine (sphingomyelin, SM) and diacylglycerol (DAG) as by-product, and in the reverse reaction transfers phosphocholine from SM to DAG to form PC and CER. The direction of the reaction depends on the levels of CER and DAG in Golgi membranes. Converts the newly synthesized CER, that is transported from the endoplasmic reticulum to the trans-Golgi by the Cer transport protein (CERT), to SM. Can form a heteromeric complex with glucosylceramide synthase (GCS) increasing SMS activity and reducing glucosylceramide synthesis, a critical mechanism that controls the metabolic fate of CER in the Golgi. Does not use free phosphorylcholine or CDP-choline as donor. Can also transfer phosphoethanolamine head group of phosphatidylethanolamine (PE) on to CER to form ceramide phosphoethanolamine (CPE). Regulates receptor-mediated signal transduction via mitogenic DAG and proapoptotic CER, as well as via SM, a structural component of membrane rafts that serve as platforms for signal transduction and protein sorting. Plays a role in secretory transport via regulation of DAG pool at the Golgi apparatus and its downstream effects on PRKD1. This Homo sapiens (Human) protein is Phosphatidylcholine:ceramide cholinephosphotransferase 1 (SGMS1).